The following is a 122-amino-acid chain: Large ribosomal subunit protein uL14 (122 aa).

This sequence belongs to the universal ribosomal protein uL14 family. In terms of assembly, part of the 50S ribosomal subunit. Forms a cluster with proteins L3 and L19. In the 70S ribosome, L14 and L19 interact and together make contacts with the 16S rRNA in bridges B5 and B8.

In terms of biological role, binds to 23S rRNA. Forms part of two intersubunit bridges in the 70S ribosome. In Cupriavidus metallidurans (strain ATCC 43123 / DSM 2839 / NBRC 102507 / CH34) (Ralstonia metallidurans), this protein is Large ribosomal subunit protein uL14.